The sequence spans 148 residues: Large ribosomal subunit protein uL13 (148 aa).

Belongs to the universal ribosomal protein uL13 family. As to quaternary structure, part of the 50S ribosomal subunit.

Functionally, this protein is one of the early assembly proteins of the 50S ribosomal subunit, although it is not seen to bind rRNA by itself. It is important during the early stages of 50S assembly. This is Large ribosomal subunit protein uL13 from Oenococcus oeni (strain ATCC BAA-331 / PSU-1).